The following is a 147-amino-acid chain: T-DNA border endonuclease VirD1 (147 aa).

Its function is as follows. Tumor formation by A.tumefaciens involves the transfer and integration of a defined segment (T-DNA) of Ti plasmid DNA into the plant nuclear genome. The virD operon encodes a site-specific endonuclease that cleaves at a unique site within both 24 bp direct repeats flanking the T-DNA. The protein is T-DNA border endonuclease VirD1 (virD1) of Rhizobium rhizogenes (Agrobacterium rhizogenes).